The following is a 269-amino-acid chain: Monofunctional glycosyltransferase (269 aa).

A helical transmembrane segment spans residues 46–66 (AIITILILLIIFFGVMYFISS).

It belongs to the glycosyltransferase 51 family.

It is found in the cell membrane. The catalysed reaction is [GlcNAc-(1-&gt;4)-Mur2Ac(oyl-L-Ala-gamma-D-Glu-L-Lys-D-Ala-D-Ala)](n)-di-trans,octa-cis-undecaprenyl diphosphate + beta-D-GlcNAc-(1-&gt;4)-Mur2Ac(oyl-L-Ala-gamma-D-Glu-L-Lys-D-Ala-D-Ala)-di-trans,octa-cis-undecaprenyl diphosphate = [GlcNAc-(1-&gt;4)-Mur2Ac(oyl-L-Ala-gamma-D-Glu-L-Lys-D-Ala-D-Ala)](n+1)-di-trans,octa-cis-undecaprenyl diphosphate + di-trans,octa-cis-undecaprenyl diphosphate + H(+). The protein operates within cell wall biogenesis; peptidoglycan biosynthesis. In terms of biological role, peptidoglycan polymerase that catalyzes glycan chain elongation using lipid-linked disaccharide-pentapeptide as the substrate. This chain is Monofunctional glycosyltransferase, found in Staphylococcus epidermidis (strain ATCC 35984 / DSM 28319 / BCRC 17069 / CCUG 31568 / BM 3577 / RP62A).